An 805-amino-acid polypeptide reads, in one-letter code: Leucine--tRNA ligase (805 aa).

The 'HIGH' region signature appears at 40 to 51; sequence PYPSGAGLHVGH. The short motif at 576–580 is the 'KMSKS' region element; sequence KMSKS. Lys-579 lines the ATP pocket.

It belongs to the class-I aminoacyl-tRNA synthetase family.

Its subcellular location is the cytoplasm. It carries out the reaction tRNA(Leu) + L-leucine + ATP = L-leucyl-tRNA(Leu) + AMP + diphosphate. In Geobacillus kaustophilus (strain HTA426), this protein is Leucine--tRNA ligase.